Reading from the N-terminus, the 181-residue chain is Oligoribonuclease (181 aa).

The Exonuclease domain occupies 8 to 171 (LIWIDLEMTG…QDIQESIAEL (164 aa)). Tyr129 is a catalytic residue.

The protein belongs to the oligoribonuclease family.

It is found in the cytoplasm. Functionally, 3'-to-5' exoribonuclease specific for small oligoribonucleotides. The polypeptide is Oligoribonuclease (Shewanella sp. (strain ANA-3)).